The primary structure comprises 147 residues: Hemoglobin subunit gamma (147 aa).

A Globin domain is found at 3-147; sequence HFTAEEKAAI…VANALAYKYH (145 aa). Residues His64 and His93 each coordinate heme b.

It belongs to the globin family. In terms of assembly, heterotetramer of two alpha chains and two gamma chains in fetal hemoglobin (Hb F). Red blood cells.

Its function is as follows. Gamma chains make up the fetal hemoglobin F, in combination with alpha chains. The protein is Hemoglobin subunit gamma (HBG) of Loxodonta africana (African elephant).